Reading from the N-terminus, the 443-residue chain is Pentatricopeptide repeat-containing protein 6, mitochondrial (443 aa).

Residues 1–13 constitute a mitochondrion transit peptide; it reads MRILGSLPNNIRK. PPR repeat units follow at residues 130 to 164 and 220 to 254; these read NIVD…RIRP and NSTT…NENS.

It localises to the mitochondrion. In terms of biological role, mitochondrial RNA-binding protein required for the stability of the atp9 mRNA. This Schizosaccharomyces pombe (strain 972 / ATCC 24843) (Fission yeast) protein is Pentatricopeptide repeat-containing protein 6, mitochondrial (ppr6).